A 106-amino-acid chain; its full sequence is Insulin-like peptide 03 (106 aa).

Residues 1–18 (MLFYFGLAVIFLIDSSQT) form the signal peptide. Positions 19 to 34 (QTLYKVNEVGGSQVDR) are excised as a propeptide. Disulfide bonds link Cys37/Cys93, Cys49/Cys106, and Cys92/Cys97. A propeptide spans 52–82 (KKRQNIPRKYGRDPNNILEKEEFAKRFLRVR) (c peptide).

The protein belongs to the insulin family.

It localises to the secreted. Functionally, insulin decreases blood glucose concentration. May have evolved to activate insulin receptors (INSR) in vertebrates. Molecular docking studies reveals unique interaction with the human insulin receptor. In vivo, insulin-like peptide injection reduces blood glucose levels in two models of zebrafish diabetes (streptozotocin- and glucose-induced). Also shorter swimming distance of zebrafish larvae, an effect which is not observed with human insulin. The polypeptide is Insulin-like peptide 03 (Exaiptasia diaphana (Tropical sea anemone)).